The sequence spans 486 residues: Protein nucleotidyltransferase YdiU (486 aa).

ATP contacts are provided by Gly89, Gly91, Arg92, Lys112, Asp124, Gly125, Arg175, and Arg182. The Proton acceptor role is filled by Asp251. Residues Asn252 and Asp261 each coordinate Mg(2+). Asp261 contributes to the ATP binding site.

Belongs to the SELO family. Mg(2+) is required as a cofactor. Mn(2+) serves as cofactor.

It catalyses the reaction L-seryl-[protein] + ATP = 3-O-(5'-adenylyl)-L-seryl-[protein] + diphosphate. It carries out the reaction L-threonyl-[protein] + ATP = 3-O-(5'-adenylyl)-L-threonyl-[protein] + diphosphate. The enzyme catalyses L-tyrosyl-[protein] + ATP = O-(5'-adenylyl)-L-tyrosyl-[protein] + diphosphate. The catalysed reaction is L-histidyl-[protein] + UTP = N(tele)-(5'-uridylyl)-L-histidyl-[protein] + diphosphate. It catalyses the reaction L-seryl-[protein] + UTP = O-(5'-uridylyl)-L-seryl-[protein] + diphosphate. It carries out the reaction L-tyrosyl-[protein] + UTP = O-(5'-uridylyl)-L-tyrosyl-[protein] + diphosphate. Functionally, nucleotidyltransferase involved in the post-translational modification of proteins. It can catalyze the addition of adenosine monophosphate (AMP) or uridine monophosphate (UMP) to a protein, resulting in modifications known as AMPylation and UMPylation. The protein is Protein nucleotidyltransferase YdiU of Shouchella clausii (strain KSM-K16) (Alkalihalobacillus clausii).